A 121-amino-acid chain; its full sequence is Small ribosomal subunit protein uS13 (121 aa).

Residues 97 to 121 (VRGQRTRTNARTRRGARKTVAGKKK) form a disordered region. The segment covering 100–121 (QRTRTNARTRRGARKTVAGKKK) has biased composition (basic residues).

This sequence belongs to the universal ribosomal protein uS13 family. In terms of assembly, part of the 30S ribosomal subunit. Forms a loose heterodimer with protein S19. Forms two bridges to the 50S subunit in the 70S ribosome.

Located at the top of the head of the 30S subunit, it contacts several helices of the 16S rRNA. In the 70S ribosome it contacts the 23S rRNA (bridge B1a) and protein L5 of the 50S subunit (bridge B1b), connecting the 2 subunits; these bridges are implicated in subunit movement. Contacts the tRNAs in the A and P-sites. The protein is Small ribosomal subunit protein uS13 of Parasynechococcus marenigrum (strain WH8102).